A 1302-amino-acid chain; its full sequence is 1-phosphatidylinositol 4,5-bisphosphate phosphodiesterase gamma-1 (1302 aa).

Ala-2 bears the N-acetylalanine mark. The PH 1 domain maps to 27-142; that stretch reads RSLEVGTVMT…WIKGLTWLME (116 aa). Residues 152 to 187 form the EF-hand domain; the sequence is QIERWLRKQFYSVDRNREDRISAKDLKNMLSQVNYR. 5 residues coordinate Ca(2+): Asp-165, Asn-167, Glu-169, Arg-171, and Asp-176. In terms of domain architecture, PI-PLC X-box spans 320–464; it reads DTMNNPLSHY…LRRKILIKHK (145 aa). Residues His-335 and His-380 contribute to the active site. The PH 2; first part domain maps to 489–523; it reads SIKNGILYLEDPVNHEWYPHYFVLTSSKIYYSEET. Tyr-506 is subject to Phosphotyrosine. A disordered region spans residues 522-545; sequence ETSSDQGNEDEEEPKEASSSTELH. SH2 domains follow at residues 550–657 and 668–756; these read WFHG…SEPV and WYHA…RYPI. Tyr-771 bears the Phosphotyrosine; by SYK mark. Tyr-775 is subject to Phosphotyrosine. Tyr-783 carries the post-translational modification Phosphotyrosine; by ITK, SYK and TXK. The SH3 domain occupies 791 to 851; the sequence is TFKCAVKALF…PSNYVEEMIN (61 aa). Residues 895–931 enclose the PH 2; second part domain; the sequence is FVFSISMPSVAQWSLDVAADSQEELQDWVKKIREVAQ. The 118-residue stretch at 953–1070 folds into the PI-PLC Y-box domain; that stretch reads LSELVVYCRP…GYVLQPSTMR (118 aa). Tyr-977 bears the Phosphotyrosine mark. One can recognise a C2 domain in the interval 1071-1194; sequence DEAFDPFDKS…TGYRAVPLKN (124 aa). Ser-1221, Ser-1227, Ser-1233, and Ser-1248 each carry phosphoserine. Position 1253 is a phosphotyrosine (Tyr-1253). Ser-1263 is subject to Phosphoserine.

In terms of assembly, interacts (via SH2 domain) with FGFR1, FGFR2, FGFR3 and FGFR4 (phosphorylated). Interacts with RALGPS1. Interacts (via SH2 domains) with VIL1 (phosphorylated at C-terminus tyrosine phosphorylation sites). Interacts (via SH2 domain) with RET. Interacts with AGAP2 via its SH3 domain. Interacts with LAT (phosphorylated) upon TCR activation. Interacts (via SH3 domain) with the Pro-rich domain of TNK1. Associates with BLNK, VAV1, GRB2 and NCK1 in a B-cell antigen receptor-dependent fashion. Interacts with CBLB in activated T-cells; which inhibits phosphorylation. Interacts with SHB. Interacts (via SH3 domain) with the Arg/Gly-rich-flanked Pro-rich domains of KHDRBS1/SAM68. This interaction is selectively regulated by arginine methylation of KHDRBS1/SAM68. Interacts with INPP5D/SHIP1, THEMIS and CLNK. Interacts with FLT4 and KIT. Interacts with AXL. Interacts with SYK; activates PLCG1. Interacts with FLT1 (tyrosine-phosphorylated). Interacts (via SH2 domain) with PDGFRA and PDGFRB (tyrosine phosphorylated). Interacts with PIP5K1C. Interacts with NTRK1 and NTRK2 (phosphorylated upon ligand-binding). Interacts with TESPA1. Interacts with GRB2, LAT and THEMIS upon TCR activation in thymocytes; the association is weaker in the absence of TESPA1. Interacts (via C-terminal proline-rich domain (PRD)) with PLCG1 (via SH3 domain); this interaction leads to guanine nucleotide exchange from PlCG1 to DNM1 and enhances DNM1-dependent endocytosis. The cofactor is Ca(2+). Post-translationally, tyrosine phosphorylated in response to signaling via activated FLT3, KIT and PDGFRA. Tyrosine phosphorylated by activated FGFR1, FGFR2, FGFR3 and FGFR4. Tyrosine phosphorylated by activated FLT1 and KDR. Tyrosine phosphorylated by activated PDGFRB. The receptor-mediated activation of PLCG1 involves its phosphorylation by tyrosine kinases in response to ligation of a variety of growth factor receptors and immune system receptors. For instance, SYK phosphorylates and activates PLCG1 in response to ligation of the B-cell receptor. Phosphorylated by ITK and TXK on Tyr-783 upon TCR activation in T-cells. May be dephosphorylated by PTPRJ. In terms of processing, ubiquitinated by CBLB in activated T-cells.

It localises to the cell projection. The protein localises to the lamellipodium. Its subcellular location is the ruffle. It carries out the reaction a 1,2-diacyl-sn-glycero-3-phospho-(1D-myo-inositol-4,5-bisphosphate) + H2O = 1D-myo-inositol 1,4,5-trisphosphate + a 1,2-diacyl-sn-glycerol + H(+). The catalysed reaction is a 1,2-diacyl-sn-glycero-3-phospho-(1D-myo-inositol) + H2O = 1D-myo-inositol 1-phosphate + a 1,2-diacyl-sn-glycerol + H(+). Its activity is regulated as follows. Activated by phosphorylation on tyrosine residues. Mediates the production of the second messenger molecules diacylglycerol (DAG) and inositol 1,4,5-trisphosphate (IP3). Plays an important role in the regulation of intracellular signaling cascades. Becomes activated in response to ligand-mediated activation of receptor-type tyrosine kinases, such as PDGFRA, PDGFRB, EGFR, FGFR1, FGFR2, FGFR3 and FGFR4. Plays a role in actin reorganization and cell migration. Guanine nucleotide exchange factor that binds the GTPase DNM1 and catalyzes the dissociation of GDP, allowing a GTP molecule to bind in its place, therefore enhancing DNM1-dependent endocytosis. The chain is 1-phosphatidylinositol 4,5-bisphosphate phosphodiesterase gamma-1 from Mus musculus (Mouse).